Here is a 73-residue protein sequence, read N- to C-terminus: Protein F9 homolog (73 aa).

Topologically, residues 1-34 (GHAAANCALARVATALTRRVPASRHGLAEGGTPP) are virion surface. Residues 35–55 (WTLLLAVAAVTVLGVVAVSLL) form a helical membrane-spanning segment. Over 56–73 (RRALRVRYRFARPAALRA) the chain is Intravirion.

Belongs to the chordopoxvirinae L1 protein family.

Its subcellular location is the virion membrane. This chain is Protein F9 homolog, found in Capra hircus (Goat).